Here is a 200-residue protein sequence, read N- to C-terminus: Dephospho-CoA kinase (200 aa).

The 198-residue stretch at 3 to 200 (VIGLTGGIGS…KKYMTLAQGS (198 aa)) folds into the DPCK domain. 11–16 (GSGKTS) is an ATP binding site.

The protein belongs to the CoaE family.

It localises to the cytoplasm. It carries out the reaction 3'-dephospho-CoA + ATP = ADP + CoA + H(+). It functions in the pathway cofactor biosynthesis; coenzyme A biosynthesis; CoA from (R)-pantothenate: step 5/5. Functionally, catalyzes the phosphorylation of the 3'-hydroxyl group of dephosphocoenzyme A to form coenzyme A. The polypeptide is Dephospho-CoA kinase (Nitrosospira multiformis (strain ATCC 25196 / NCIMB 11849 / C 71)).